The sequence spans 199 residues: NADH-quinone oxidoreductase subunit C (199 aa).

The protein belongs to the complex I 30 kDa subunit family. NDH-1 is composed of 14 different subunits. Subunits NuoB, C, D, E, F, and G constitute the peripheral sector of the complex.

The protein resides in the cell inner membrane. It catalyses the reaction a quinone + NADH + 5 H(+)(in) = a quinol + NAD(+) + 4 H(+)(out). Its function is as follows. NDH-1 shuttles electrons from NADH, via FMN and iron-sulfur (Fe-S) centers, to quinones in the respiratory chain. The immediate electron acceptor for the enzyme in this species is believed to be ubiquinone. Couples the redox reaction to proton translocation (for every two electrons transferred, four hydrogen ions are translocated across the cytoplasmic membrane), and thus conserves the redox energy in a proton gradient. The polypeptide is NADH-quinone oxidoreductase subunit C (Rhodopseudomonas palustris (strain BisB18)).